The primary structure comprises 417 residues: Phosphoglycerate kinase 1 (417 aa).

N-acetylserine is present on Ser2. Phosphoserine occurs at positions 2 and 4. An N6-succinyllysine modification is found at Lys6. The residue at position 11 (Lys11) is an N6-acetyllysine. (2R)-3-phosphoglycerate contacts are provided by Val23, Asp24, Phe25, Asn26, Gln38, Arg39, Ser62, His63, Gly65, and Arg66. Positions 38 to 43 (QRIKAA) are mitochondrial targeting region exposed following cis-trans isomerization by PIN1 and recognized by the TOM complex for mitochondrial translocation of the protein. Lys75 is modified (N6-acetyllysine). The residue at position 76 (Tyr76) is a Phosphotyrosine. N6-acetyllysine occurs at positions 86 and 91. N6-(2-hydroxyisobutyryl)lysine; alternate is present on Lys97. Position 97 is an N6-acetyllysine; alternate (Lys97). (2R)-3-phosphoglycerate is bound by residues Leu122 and Arg123. The residue at position 131 (Lys131) is an N6-acetyllysine; alternate. Lys131 is subject to N6-malonyllysine; alternate. Lys146 carries the post-translational modification N6-acetyllysine. Residues His170 and Arg171 each coordinate (2R)-3-phosphoglycerate. Lys191 carries the post-translational modification N6-succinyllysine. Tyr196 bears the Phosphotyrosine mark. The residue at position 199 (Lys199) is an N6-acetyllysine. Position 203 is a phosphoserine (Ser203). An ADP-binding site is contributed by Gly214. Gly214 serves as a coordination point for CDP. AMP is bound by residues Ala215 and Lys216. Ala215 lines the ATP pocket. Position 215 (Ala215) interacts with Mg(2+). Lys216 carries the N6-(2-hydroxyisobutyryl)lysine modification. Positions 218 and 219 each coordinate Mg(2+). CDP is bound at residue Asp219. Lys220 lines the AMP pocket. Position 220 (Lys220) interacts with ATP. Residue Lys220 is modified to N6-(2-hydroxyisobutyryl)lysine. Gly238 contacts ADP. Gly238 lines the CDP pocket. Gly239 is an AMP binding site. An ATP-binding site is contributed by Gly239. Residues Lys267 and Lys291 each carry the N6-acetyllysine modification. An AMP-binding site is contributed by Gly313. ATP is bound at residue Gly313. Lys323 carries the N6-(2-hydroxyisobutyryl)lysine modification. The CDP site is built by Gly338, Val340, and Phe343. ADP is bound at residue Phe343. Glu344 lines the AMP pocket. ATP-binding residues include Glu344, Asp375, and Thr376. Asp375 contributes to the Mg(2+) binding site.

Belongs to the phosphoglycerate kinase family. Monomer. Interacts with kinase MAPK1/ERK2; the interaction is direct, occurs under hypoxic conditions, and promotes its interaction with PIN1. Interacts with peptidyl-prolyl cis-trans isomerase PIN1; the interaction is direct, occurs under hypoxic conditions, and targets the protein to the mitochondrion by promoting interactions with the TOM complex. Interacts with mitochondrial circRNA mcPGK1 (via its 2nd stem-loop); the interaction is direct and targets the protein to the mitochondrion by promoting interactions with the TOM complex. Interacts with pyruvate dehydrogenase kinase PDK1; the interaction is direct, occurs under hypoxic conditions and leads to PDK1-mediated inhibition of pyruvate dehydrogenase complex activity. Requires Mg(2+) as cofactor. Post-translationally, phosphorylated at Ser-203 by MAPK1/ERK2 under hypoxic conditions, which promotes its mitochondrial targeting.

The protein localises to the cytoplasm. The protein resides in the cytosol. It localises to the mitochondrion matrix. The catalysed reaction is (2R)-3-phosphoglycerate + ATP = (2R)-3-phospho-glyceroyl phosphate + ADP. The enzyme catalyses L-seryl-[protein] + ATP = O-phospho-L-seryl-[protein] + ADP + H(+). It functions in the pathway carbohydrate degradation; glycolysis; pyruvate from D-glyceraldehyde 3-phosphate: step 2/5. Functionally, catalyzes one of the two ATP producing reactions in the glycolytic pathway via the reversible conversion of 1,3-diphosphoglycerate to 3-phosphoglycerate. Both L- and D- forms of purine and pyrimidine nucleotides can be used as substrates, but the activity is much lower on pyrimidines. In addition to its role as a glycolytic enzyme, it seems that PGK-1 acts as a polymerase alpha cofactor protein (primer recognition protein). Acts as a protein kinase when localized to the mitochondrion where it phosphorylates pyruvate dehydrogenase kinase PDK1 to inhibit pyruvate dehydrogenase complex activity and suppress the formation of acetyl-coenzyme A from pyruvate, and consequently inhibit oxidative phosphorylation and promote glycolysis. May play a role in sperm motility. The sequence is that of Phosphoglycerate kinase 1 (PGK1) from Notamacropus eugenii (Tammar wallaby).